Reading from the N-terminus, the 314-residue chain is L-lactate dehydrogenase 2 (314 aa).

NAD(+) contacts are provided by residues Val16, Asp37, Lys42, Tyr68, and 82–83 (GL). Residues Gln85, Arg91, and 123-126 (NPVD) each bind substrate. Residues 121 to 123 (ATN) and Ser146 each bind NAD(+). 151–154 (DSAR) contacts substrate. Residues Arg156 and His171 each coordinate beta-D-fructose 1,6-bisphosphate. Catalysis depends on His178, which acts as the Proton acceptor. Tyr223 is modified (phosphotyrosine). Thr232 provides a ligand contact to substrate.

The protein belongs to the LDH/MDH superfamily. LDH family. Homotetramer.

The protein localises to the cytoplasm. It catalyses the reaction (S)-lactate + NAD(+) = pyruvate + NADH + H(+). The protein operates within fermentation; pyruvate fermentation to lactate; (S)-lactate from pyruvate: step 1/1. Allosterically activated by fructose 1,6-bisphosphate (FBP). Its function is as follows. Catalyzes the conversion of lactate to pyruvate. This chain is L-lactate dehydrogenase 2, found in Bacillus anthracis.